Here is a 117-residue protein sequence, read N- to C-terminus: Anti-adapter protein IraM (117 aa).

Belongs to the IraM/RssC family.

The protein resides in the cytoplasm. Functionally, involved in the stabilization of the sigma stress factor RpoS. This Klebsiella pneumoniae (strain 342) protein is Anti-adapter protein IraM.